The sequence spans 231 residues: MKRAVVVFSGGQDSTTCLVQALQQYDEVHCVTFDYGQRHRAEIDVARELALKLGARAHKVLDVTLLNELAVSSLTRDSIPVPDYEPEADGIPNTFVPGRNILFLTLAAIYAYQVKAEAVITGVCETDFSGYPDCRDEFVKALNHAVSLGMAKDIRFETPLMWIDKAETWALADYYGKLDLVRNETLTCYNGIKGDGCGHCAACNLRANGLNHYLADKPTVMAAMKQKTGLN.

An ATP-binding site is contributed by Phe-8–Leu-18. Zn(2+)-binding residues include Cys-188, Cys-197, Cys-200, and Cys-203.

This sequence belongs to the QueC family. Zn(2+) is required as a cofactor.

The enzyme catalyses 7-carboxy-7-deazaguanine + NH4(+) + ATP = 7-cyano-7-deazaguanine + ADP + phosphate + H2O + H(+). It functions in the pathway purine metabolism; 7-cyano-7-deazaguanine biosynthesis. Catalyzes the ATP-dependent conversion of 7-carboxy-7-deazaguanine (CDG) to 7-cyano-7-deazaguanine (preQ(0)). The polypeptide is 7-cyano-7-deazaguanine synthase (Escherichia coli (strain SMS-3-5 / SECEC)).